The chain runs to 363 residues: MKRVYNFSPGPAALPQEVIKQAAEEMTNWRGSGLSVMEMSHRGREFTEILATTKADLRSLLSIPDNYKILLMQGGAIAENAIVPMNLVGSKAQPATIDFVNTGHWSSKTIEEAHKYAKVNIAASSEDKDFTYVPARDTWKLTPDAAYVHICTNETIGGVEFDFTPDVGNVPLVADMSSNILSREIDISKYAVIYAGAQKNIGPAGVTIVIVRDDMLGHALPICPSAFDWKLVDEHDSMFNTPPTYPIYIAGLTFQWMLRQGGVAAMEQVNIAKAKLIYDYLDSTDFYVNSVPAANRSRMNVPFFLKDESLNGKFITEADAQGLVQLKGHSSVGGMRASIYNAMPIEGVQALVAFMKDFEKKYG.

L-glutamate is bound at residue arginine 42. 4 residues coordinate pyridoxal 5'-phosphate: tryptophan 105, threonine 155, aspartate 175, and glutamine 198. At lysine 199 the chain carries N6-(pyridoxal phosphate)lysine. 240 to 241 (NT) contacts pyridoxal 5'-phosphate.

Belongs to the class-V pyridoxal-phosphate-dependent aminotransferase family. SerC subfamily. In terms of assembly, homodimer. Pyridoxal 5'-phosphate serves as cofactor.

Its subcellular location is the cytoplasm. The catalysed reaction is O-phospho-L-serine + 2-oxoglutarate = 3-phosphooxypyruvate + L-glutamate. The enzyme catalyses 4-(phosphooxy)-L-threonine + 2-oxoglutarate = (R)-3-hydroxy-2-oxo-4-phosphooxybutanoate + L-glutamate. It functions in the pathway amino-acid biosynthesis; L-serine biosynthesis; L-serine from 3-phospho-D-glycerate: step 2/3. It participates in cofactor biosynthesis; pyridoxine 5'-phosphate biosynthesis; pyridoxine 5'-phosphate from D-erythrose 4-phosphate: step 3/5. Its function is as follows. Catalyzes the reversible conversion of 3-phosphohydroxypyruvate to phosphoserine and of 3-hydroxy-2-oxo-4-phosphonooxybutanoate to phosphohydroxythreonine. This chain is Phosphoserine aminotransferase, found in Janthinobacterium sp. (strain Marseille) (Minibacterium massiliensis).